An 89-amino-acid chain; its full sequence is Small ribosomal subunit protein uS15 (89 aa).

This sequence belongs to the universal ribosomal protein uS15 family. As to quaternary structure, part of the 30S ribosomal subunit. Forms a bridge to the 50S subunit in the 70S ribosome, contacting the 23S rRNA.

In terms of biological role, one of the primary rRNA binding proteins, it binds directly to 16S rRNA where it helps nucleate assembly of the platform of the 30S subunit by binding and bridging several RNA helices of the 16S rRNA. Its function is as follows. Forms an intersubunit bridge (bridge B4) with the 23S rRNA of the 50S subunit in the ribosome. This chain is Small ribosomal subunit protein uS15, found in Kineococcus radiotolerans (strain ATCC BAA-149 / DSM 14245 / SRS30216).